Consider the following 374-residue polypeptide: Layilin (374 aa).

A signal peptide spans 1–24 (MQPGPALQAVLLAVLLSEPRSSKG). Topologically, residues 25 to 221 (RLLSGQLVCR…TKETFKESRE (197 aa)) are extracellular. One can recognise a C-type lectin domain in the interval 37–177 (TRRPCYKVIY…CNMKNNFICK (141 aa)). 2 disulfide bridges follow: cysteine 63/cysteine 176 and cysteine 142/cysteine 168. Asparagine 109 carries an N-linked (GlcNAc...) asparagine glycan. The interval 184-212 (STTPSIRPGGEATEPPTPVLPEETQKEDT) is disordered. The helical transmembrane segment at 222-242 (AALNLAYILIPSIPLFLLLVV) threads the bilayer. Residues 243-374 (TSAACWVWIC…SGWVENEIYY (132 aa)) are Cytoplasmic-facing. Phosphoserine occurs at positions 279 and 292. The interval 323 to 367 (DYDNMAVNPSESGFVTLASMESGFVTNDIYEFSPDRMGRSKESGW) is interaction with NF2. Residues 330 to 374 (NPSESGFVTLASMESGFVTNDIYEFSPDRMGRSKESGWVENEIYY) form an interaction with TLN1 region. Repeat copies occupy residues 333–337 (ESGFV), 343–347 (ESGFV), 349–352 (NDIY), 364–368 (ESGWV), and 370–373 (NEIY). The tract at residues 333–368 (ESGFVTLASMESGFVTNDIYEFSPDRMGRSKESGWV) is 3 X 5 AA repeats of E-S-G-X-V. Residues 349–373 (NDIYEFSPDRMGRSKESGWVENEIY) are 2 X 4 AA repeats of N-X-I-Y.

Interacts with NF2 and RDX. Interacts with TLN1. In terms of tissue distribution, widely expressed. Abundant in the ovary.

It is found in the membrane. Receptor for hyaluronate. The protein is Layilin (LAYN) of Cricetulus griseus (Chinese hamster).